The following is a 449-amino-acid chain: Signal recognition particle protein (449 aa).

GTP-binding positions include 109-116, 191-195, and 249-252; these read GLQGSGKT, DTAGR, and SRID.

This sequence belongs to the GTP-binding SRP family. SRP54 subfamily. As to quaternary structure, part of the signal recognition particle protein translocation system, which is composed of SRP and FtsY. SRP is a ribonucleoprotein composed of Ffh and a 4.5S RNA molecule.

The protein localises to the cytoplasm. It catalyses the reaction GTP + H2O = GDP + phosphate + H(+). Involved in targeting and insertion of nascent membrane proteins into the cytoplasmic membrane. Binds to the hydrophobic signal sequence of the ribosome-nascent chain (RNC) as it emerges from the ribosomes. The SRP-RNC complex is then targeted to the cytoplasmic membrane where it interacts with the SRP receptor FtsY. Interaction with FtsY leads to the transfer of the RNC complex to the Sec translocase for insertion into the membrane, the hydrolysis of GTP by both Ffh and FtsY, and the dissociation of the SRP-FtsY complex into the individual components. This Rickettsia felis (strain ATCC VR-1525 / URRWXCal2) (Rickettsia azadi) protein is Signal recognition particle protein.